Here is a 169-residue protein sequence, read N- to C-terminus: Lipoprotein signal peptidase (169 aa).

4 consecutive transmembrane segments (helical) span residues 4 to 24 (PICS…ILDI), 29 to 49 (WVMA…FNLT), 70 to 90 (WFFA…MYRS), and 101 to 121 (YALI…HGAV). Residues Asp123 and Asp141 contribute to the active site. The helical transmembrane segment at 137–157 (FNLADVAISIGAVLVIFEGFL) threads the bilayer.

This sequence belongs to the peptidase A8 family.

It localises to the cell inner membrane. It catalyses the reaction Release of signal peptides from bacterial membrane prolipoproteins. Hydrolyzes -Xaa-Yaa-Zaa-|-(S,diacylglyceryl)Cys-, in which Xaa is hydrophobic (preferably Leu), and Yaa (Ala or Ser) and Zaa (Gly or Ala) have small, neutral side chains.. It participates in protein modification; lipoprotein biosynthesis (signal peptide cleavage). Its function is as follows. This protein specifically catalyzes the removal of signal peptides from prolipoproteins. The protein is Lipoprotein signal peptidase of Yersinia pseudotuberculosis serotype O:1b (strain IP 31758).